The sequence spans 368 residues: Ferrochelatase (368 aa).

Fe cation-binding residues include His-209 and Glu-290.

The protein belongs to the ferrochelatase family.

The protein localises to the cytoplasm. The catalysed reaction is heme b + 2 H(+) = protoporphyrin IX + Fe(2+). Its pathway is porphyrin-containing compound metabolism; protoheme biosynthesis; protoheme from protoporphyrin-IX: step 1/1. In terms of biological role, catalyzes the ferrous insertion into protoporphyrin IX. This Herminiimonas arsenicoxydans protein is Ferrochelatase.